A 193-amino-acid polypeptide reads, in one-letter code: Large ribosomal subunit protein bL12cy (193 aa).

Residues 1-59 constitute a chloroplast transit peptide; sequence MAATTLSIATTIRSSSFSSGLASAHHFPSRPLSIEFPFSFGVSSSSTLSHRAIYLHPIS. Basic and acidic residues predominate over residues 170–187; sequence GVTKDEAEEDKTQLEEAG. The disordered stretch occupies residues 170 to 193; sequence GVTKDEAEEDKTQLEEAGAKVSIV.

This sequence belongs to the bacterial ribosomal protein bL12 family.

It localises to the plastid. The protein resides in the chloroplast. The chain is Large ribosomal subunit protein bL12cy (RPL12B) from Arabidopsis thaliana (Mouse-ear cress).